Consider the following 351-residue polypeptide: UPF0104 membrane protein MTH_887 (351 aa).

Helical transmembrane passes span 20–40 (IVLS…FAGF), 51–71 (SPYF…LWTL), 137–157 (VFEF…IMTW), 165–185 (IVVS…VYAG), 244–264 (FVIG…RLYV), 275–295 (AVPL…PILP), 304–324 (ILVG…AASV), and 328–348 (IASY…YGKQ).

This sequence belongs to the UPF0104 family.

The protein resides in the cell membrane. This Methanothermobacter thermautotrophicus (strain ATCC 29096 / DSM 1053 / JCM 10044 / NBRC 100330 / Delta H) (Methanobacterium thermoautotrophicum) protein is UPF0104 membrane protein MTH_887.